The primary structure comprises 257 residues: Large ribosomal subunit protein uL2 (257 aa).

Residues 207–230 (VEHPFGGGNHQHIGKPSTIRRDAP) are disordered.

It belongs to the universal ribosomal protein uL2 family. Component of the large ribosomal subunit.

It is found in the cytoplasm. In terms of biological role, component of the large ribosomal subunit. The ribosome is a large ribonucleoprotein complex responsible for the synthesis of proteins in the cell. In Danio rerio (Zebrafish), this protein is Large ribosomal subunit protein uL2 (rpl8).